Reading from the N-terminus, the 153-residue chain is UPF0260 protein YcgN (153 aa).

The protein belongs to the UPF0260 family.

The sequence is that of UPF0260 protein YcgN from Salmonella dublin (strain CT_02021853).